Here is a 481-residue protein sequence, read N- to C-terminus: 2-methylisoborneol synthase (481 aa).

Disordered regions lie at residues Met1–Pro125 and Gln139–Val160. The span at Thr11–Thr23 shows a compositional bias: pro residues. Positions Ala24–Thr33 are enriched in low complexity. Composition is skewed to pro residues over residues Val52–Pro64 and Ser71–Thr104. The segment covering Ala105–Ser114 has biased composition (low complexity). Positions 238, 239, 243, 386, 390, and 394 each coordinate Mg(2+).

This sequence belongs to the terpene synthase family. 2-methylisoborneol synthase subfamily. Mg(2+) serves as cofactor.

The catalysed reaction is (E)-2-methylgeranyl diphosphate + H2O = 2-methylisoborneol + diphosphate. Catalyzes the cyclization of 2-methylgeranyl diphosphate (2-MeGPP) to 2-methylisoborneol (2-MIB), which likely involves the intermediacy of 2-methyllinalyl diphosphate. The sequence is that of 2-methylisoborneol synthase (tpc) from Streptomyces lasalocidi (Streptomyces lasaliensis).